A 256-amino-acid polypeptide reads, in one-letter code: uncharacterized protein (256 aa).

Position 9–33 (9–33 (VTGGGQGIGAAIAQLFAENGMKVVI)) interacts with NADP(+). Substrate is bound at residue S140. Y153 functions as the Proton acceptor in the catalytic mechanism.

The protein belongs to the short-chain dehydrogenases/reductases (SDR) family.

This is an uncharacterized protein from Thermotoga maritima (strain ATCC 43589 / DSM 3109 / JCM 10099 / NBRC 100826 / MSB8).